Reading from the N-terminus, the 268-residue chain is 4-diphosphocytidyl-2-C-methyl-D-erythritol kinase (268 aa).

The active site involves lysine 10. 101–111 is an ATP binding site; it reads PTQAGLGGGST. Aspartate 143 is a catalytic residue.

The protein belongs to the GHMP kinase family. IspE subfamily.

It catalyses the reaction 4-CDP-2-C-methyl-D-erythritol + ATP = 4-CDP-2-C-methyl-D-erythritol 2-phosphate + ADP + H(+). It participates in isoprenoid biosynthesis; isopentenyl diphosphate biosynthesis via DXP pathway; isopentenyl diphosphate from 1-deoxy-D-xylulose 5-phosphate: step 3/6. Functionally, catalyzes the phosphorylation of the position 2 hydroxy group of 4-diphosphocytidyl-2C-methyl-D-erythritol. This Helicobacter acinonychis (strain Sheeba) protein is 4-diphosphocytidyl-2-C-methyl-D-erythritol kinase.